The sequence spans 247 residues: 7-cyano-7-deazaguanine synthase (247 aa).

ATP is bound at residue 21-31; that stretch reads FSGGQDSTACL. Residues C209, C224, C227, and C230 each coordinate Zn(2+).

Belongs to the QueC family. Zn(2+) is required as a cofactor.

It catalyses the reaction 7-carboxy-7-deazaguanine + NH4(+) + ATP = 7-cyano-7-deazaguanine + ADP + phosphate + H2O + H(+). The protein operates within purine metabolism; 7-cyano-7-deazaguanine biosynthesis. In terms of biological role, catalyzes the ATP-dependent conversion of 7-carboxy-7-deazaguanine (CDG) to 7-cyano-7-deazaguanine (preQ(0)). In Halorhodospira halophila (strain DSM 244 / SL1) (Ectothiorhodospira halophila (strain DSM 244 / SL1)), this protein is 7-cyano-7-deazaguanine synthase.